We begin with the raw amino-acid sequence, 191 residues long: MSEKKNKKERLADEIEQEELNILDESEETVEEEATADALTEEQAKILELENKLDEVENRYLRMQADFENVKKRHIADRDASQKYRSQSLAEDLLPALDSFEKALATTSDQEEVKQILKGMEMVYNQILVAFEKEGIEVIPAVGEQFDPNFHQAVMQDSDENAASNEITAELQKGYKLKDRVIRPSMVKVNQ.

The protein belongs to the GrpE family. As to quaternary structure, homodimer.

It is found in the cytoplasm. Functionally, participates actively in the response to hyperosmotic and heat shock by preventing the aggregation of stress-denatured proteins, in association with DnaK and GrpE. It is the nucleotide exchange factor for DnaK and may function as a thermosensor. Unfolded proteins bind initially to DnaJ; upon interaction with the DnaJ-bound protein, DnaK hydrolyzes its bound ATP, resulting in the formation of a stable complex. GrpE releases ADP from DnaK; ATP binding to DnaK triggers the release of the substrate protein, thus completing the reaction cycle. Several rounds of ATP-dependent interactions between DnaJ, DnaK and GrpE are required for fully efficient folding. The chain is Protein GrpE from Listeria welshimeri serovar 6b (strain ATCC 35897 / DSM 20650 / CCUG 15529 / CIP 8149 / NCTC 11857 / SLCC 5334 / V8).